A 312-amino-acid polypeptide reads, in one-letter code: Deoxyribonuclease Tat-D (312 aa).

A divalent metal cation is bound by residues E124, H161, H187, and D235.

It belongs to the metallo-dependent hydrolases superfamily. TatD-type hydrolase family. Requires a divalent metal cation as cofactor.

It is found in the cytoplasm. It localises to the nucleus. Has both endo- and exonuclease activities. Incises double-stranded DNA without obvious specificity via its endonuclease activity and excises the DNA from the 3'-to 5'-end by its exonuclease activity. May have a role in apoptosis. The chain is Deoxyribonuclease Tat-D from Schizosaccharomyces pombe (strain 972 / ATCC 24843) (Fission yeast).